We begin with the raw amino-acid sequence, 173 residues long: Alpha-crystallin A chain (173 aa).

Met-1 carries the post-translational modification N-acetylmethionine. Positions 1-63 (MDIAIQHPWF…RSVLDSGISE (63 aa)) are required for complex formation with BFSP1 and BFSP2. Gln-6 is subject to Deamidated glutamine; partial. A Phosphoserine modification is found at Ser-45. The residue at position 50 (Gln-50) is a Deamidated glutamine; partial. One can recognise a sHSP domain in the interval 52-162 (VFRSVLDSGI…GHSERAIPVS (111 aa)). N6-acetyllysine is present on residues Lys-70 and Lys-99. Residue His-100 participates in Zn(2+) binding. The residue at position 101 (Asn-101) is a Deamidated asparagine; partial. 2 residues coordinate Zn(2+): Glu-102 and His-107. Residue Ser-122 is modified to Phosphoserine. At Asn-123 the chain carries Deamidated asparagine; partial. The segment at 144–173 (PKVPSGVDAGHSERAIPVSREEKPSSAPSS) is disordered. Positions 153–167 (GHSERAIPVSREEKP) are enriched in basic and acidic residues. Zn(2+) is bound at residue His-154. Ser-162 carries an O-linked (GlcNAc) serine glycan.

It belongs to the small heat shock protein (HSP20) family. Heteromer composed of three CRYAA and one CRYAB subunits. Inter-subunit bridging via zinc ions enhances stability, which is crucial as there is no protein turn over in the lens. Can also form homodimers and homotetramers (dimers of dimers) which serve as the building blocks of homooligomers. Within homooligomers, the zinc-binding motif is created from residues of 3 different molecules. His-100 and Glu-102 from one molecule are ligands of the zinc ion, and His-107 and His-154 residues from additional molecules complete the site with tetrahedral coordination geometry. Part of a complex required for lens intermediate filament formation composed of BFSP1, BFSP2 and CRYAA. Acetylation at Lys-70 may increase chaperone activity. In terms of processing, undergoes age-dependent proteolytical cleavage at the C-terminus.

It is found in the cytoplasm. It localises to the nucleus. Contributes to the transparency and refractive index of the lens. Acts as a chaperone, preventing aggregation of various proteins under a wide range of stress conditions. Required for the correct formation of lens intermediate filaments as part of a complex composed of BFSP1, BFSP2 and CRYAA. The polypeptide is Alpha-crystallin A chain (CRYAA) (Halichoerus grypus (Gray seal)).